Consider the following 370-residue polypeptide: Pantothenate kinase 3 (370 aa).

The active-site Proton acceptor is the Glu-138. Residues Ser-192, Ser-195, and Arg-207 each contribute to the acetyl-CoA site.

This sequence belongs to the type II pantothenate kinase family. Homodimer. Highly expressed in the liver.

Its subcellular location is the cytoplasm. The catalysed reaction is (R)-pantothenate + ATP = (R)-4'-phosphopantothenate + ADP + H(+). It functions in the pathway cofactor biosynthesis; coenzyme A biosynthesis; CoA from (R)-pantothenate: step 1/5. With respect to regulation, subject to allosteric regulation, exists in two distinct conformational states, a catalytically incompetent (or open) conformation stabilized by the binding of acetyl(acyl)-CoA, and a catalytically competent (or closed) conformation stabilized by ATP-binding. Acetyl-CoA and its thioesters act as allosteric inhibitors and compete with the ATP-binding site. Strongly inhibited by acetyl-CoA, malonyl-CoA and palmitoyl CoA and modestly inhibited by CoA. Inhibited by calcium hopantenate. Its function is as follows. Catalyzes the phosphorylation of pantothenate to generate 4'-phosphopantothenate in the first and rate-determining step of coenzyme A (CoA) synthesis. The sequence is that of Pantothenate kinase 3 (Pank3) from Mus musculus (Mouse).